A 310-amino-acid chain; its full sequence is Ribosomal RNA small subunit methyltransferase H (310 aa).

S-adenosyl-L-methionine contacts are provided by residues 35-37 (GGH), aspartate 52, phenylalanine 79, aspartate 100, and glutamine 107.

The protein belongs to the methyltransferase superfamily. RsmH family.

Its subcellular location is the cytoplasm. The enzyme catalyses cytidine(1402) in 16S rRNA + S-adenosyl-L-methionine = N(4)-methylcytidine(1402) in 16S rRNA + S-adenosyl-L-homocysteine + H(+). Its function is as follows. Specifically methylates the N4 position of cytidine in position 1402 (C1402) of 16S rRNA. The sequence is that of Ribosomal RNA small subunit methyltransferase H from Anaeromyxobacter sp. (strain Fw109-5).